The primary structure comprises 321 residues: Aspartate carbamoyltransferase catalytic subunit (321 aa).

Residues arginine 65 and threonine 66 each coordinate carbamoyl phosphate. Lysine 93 is an L-aspartate binding site. Arginine 115, histidine 143, and glutamine 146 together coordinate carbamoyl phosphate. L-aspartate is bound by residues arginine 176 and arginine 230. 2 residues coordinate carbamoyl phosphate: glycine 271 and proline 272.

This sequence belongs to the aspartate/ornithine carbamoyltransferase superfamily. ATCase family. As to quaternary structure, heterododecamer (2C3:3R2) of six catalytic PyrB chains organized as two trimers (C3), and six regulatory PyrI chains organized as three dimers (R2).

It carries out the reaction carbamoyl phosphate + L-aspartate = N-carbamoyl-L-aspartate + phosphate + H(+). It participates in pyrimidine metabolism; UMP biosynthesis via de novo pathway; (S)-dihydroorotate from bicarbonate: step 2/3. In terms of biological role, catalyzes the condensation of carbamoyl phosphate and aspartate to form carbamoyl aspartate and inorganic phosphate, the committed step in the de novo pyrimidine nucleotide biosynthesis pathway. The sequence is that of Aspartate carbamoyltransferase catalytic subunit from Bartonella quintana (strain Toulouse) (Rochalimaea quintana).